The primary structure comprises 281 residues: NADPH-dependent 7-cyano-7-deazaguanine reductase (281 aa).

81–83 (VES) contacts substrate. 83–84 (SK) contributes to the NADPH binding site. Cysteine 188 serves as the catalytic Thioimide intermediate. The active-site Proton donor is aspartate 195. 227 to 228 (HE) is a binding site for substrate. Position 256–257 (256–257 (RG)) interacts with NADPH.

Belongs to the GTP cyclohydrolase I family. QueF type 2 subfamily. As to quaternary structure, homodimer.

It is found in the cytoplasm. The catalysed reaction is 7-aminomethyl-7-carbaguanine + 2 NADP(+) = 7-cyano-7-deazaguanine + 2 NADPH + 3 H(+). The protein operates within tRNA modification; tRNA-queuosine biosynthesis. Functionally, catalyzes the NADPH-dependent reduction of 7-cyano-7-deazaguanine (preQ0) to 7-aminomethyl-7-deazaguanine (preQ1). This is NADPH-dependent 7-cyano-7-deazaguanine reductase from Acidovorax ebreus (strain TPSY) (Diaphorobacter sp. (strain TPSY)).